The following is a 141-amino-acid chain: Nucleoside diphosphate kinase (141 aa).

ATP-binding residues include Lys-11, Phe-59, Arg-87, Thr-93, Arg-104, and Asn-114. The active-site Pros-phosphohistidine intermediate is His-117.

The protein belongs to the NDK family. As to quaternary structure, homotetramer. Mg(2+) serves as cofactor.

The protein resides in the cytoplasm. The catalysed reaction is a 2'-deoxyribonucleoside 5'-diphosphate + ATP = a 2'-deoxyribonucleoside 5'-triphosphate + ADP. It carries out the reaction a ribonucleoside 5'-diphosphate + ATP = a ribonucleoside 5'-triphosphate + ADP. Its function is as follows. Major role in the synthesis of nucleoside triphosphates other than ATP. The ATP gamma phosphate is transferred to the NDP beta phosphate via a ping-pong mechanism, using a phosphorylated active-site intermediate. The protein is Nucleoside diphosphate kinase of Azoarcus sp. (strain BH72).